A 427-amino-acid polypeptide reads, in one-letter code: Glutamate-1-semialdehyde 2,1-aminomutase (427 aa).

Lysine 265 is subject to N6-(pyridoxal phosphate)lysine.

It belongs to the class-III pyridoxal-phosphate-dependent aminotransferase family. HemL subfamily. In terms of assembly, homodimer. The cofactor is pyridoxal 5'-phosphate.

It localises to the cytoplasm. The enzyme catalyses (S)-4-amino-5-oxopentanoate = 5-aminolevulinate. It participates in porphyrin-containing compound metabolism; protoporphyrin-IX biosynthesis; 5-aminolevulinate from L-glutamyl-tRNA(Glu): step 2/2. The polypeptide is Glutamate-1-semialdehyde 2,1-aminomutase (Neisseria meningitidis serogroup C / serotype 2a (strain ATCC 700532 / DSM 15464 / FAM18)).